We begin with the raw amino-acid sequence, 637 residues long: Glutamate--cysteine ligase catalytic subunit (637 aa).

Met-1 carries the post-translational modification N-acetylmethionine. A phosphoserine mark is found at Ser-5 and Ser-8.

This sequence belongs to the glutamate--cysteine ligase type 3 family. In terms of assembly, heterodimer of a catalytic heavy chain and a regulatory light chain. Most abundant in kidney. Also found in liver and testis.

It catalyses the reaction L-cysteine + L-glutamate + ATP = gamma-L-glutamyl-L-cysteine + ADP + phosphate + H(+). The enzyme catalyses (2S)-2-aminobutanoate + L-glutamate + ATP = gamma-L-glutamyl-(2S)-2-aminobutanoate + ADP + phosphate + H(+). Its pathway is sulfur metabolism; glutathione biosynthesis; glutathione from L-cysteine and L-glutamate: step 1/2. Feedback inhibition by glutathione. Catalyzes the ATP-dependent ligation of L-glutamate and L-cysteine and participates in the first and rate-limiting step in glutathione biosynthesis. The chain is Glutamate--cysteine ligase catalytic subunit from Rattus norvegicus (Rat).